The sequence spans 93 residues: Uteroglobin (93 aa).

The N-terminal stretch at 1-17 (MKLAITIILVMLSVCYS) is a signal peptide.

It belongs to the secretoglobin family. Antiparallel homodimer; disulfide-linked. Interaction with LMBR1L is controversial.

The protein resides in the secreted. Its function is as follows. Binds phosphatidylcholine, phosphatidylinositol, polychlorinated biphenyls (PCB) and weakly progesterone, potent inhibitor of phospholipase A2. The sequence is that of Uteroglobin (SCGB1A1) from Neotomodon alstoni (Mexican volcano mouse).